The primary structure comprises 696 residues: Mitosis initiation protein fs(1)Ya (696 aa).

Disordered stretches follow at residues 245–285 (NAST…RAWK), 336–379 (EHSS…YSTS), and 457–492 (IKFE…TPEI). 2 stretches are compositionally biased toward low complexity: residues 270–281 (QQQQQQQQPLQQ) and 361–379 (SESS…YSTS). The tract at residues 448 to 696 (TGAGINKKQI…REPIERMRRQ (249 aa)) is rich in charged AA. Threonine 478, threonine 484, and threonine 489 each carry phosphothreonine. Short sequence motifs (nuclear localization signal) lie at residues 512-520 (PKKDKPKEK) and 534-538 (QPRVR). Disordered stretches follow at residues 555 to 586 (DVGE…KLEA) and 603 to 696 (PASL…MRRQ). Over residues 557–569 (GEPEVVDAEEEDE) the composition is skewed to acidic residues. Basic and acidic residues-rich tracts occupy residues 607–624 (RGER…DKEN) and 685–696 (RPREPIERMRRQ).

The protein resides in the nucleus envelope. The protein localises to the nucleus. It is found in the nucleoplasm. Its subcellular location is the cytoplasm. Its function is as follows. Cell cycle-dependent nuclear envelope component required for embryonic mitosis. This chain is Mitosis initiation protein fs(1)Ya (fs(1)Ya), found in Drosophila melanogaster (Fruit fly).